A 372-amino-acid polypeptide reads, in one-letter code: MANVSLRNVGKSYGDVHISKDINLEINEGEFVVFVGPSGCGKSTLLRMIAGLEDITTGELYIGEKLMNDVEPSKRGIGMVFQSYALYPHLDVADNMSFGLKLAGVKKNERDQRVNQVAEILQLAHLLDRKPKALSGGQRQRVAIGRTLVSQPEVFLLDEPLSNLDAALRVQMRVEISKLHKKLNRTMIYVTHDQVEAMTLADKIVVLNAGGVAQVGKPLELYHYPANRFVAGFIGSPKMNFLPVKVTAVEENQVKIELPDANHHNFWIPVSGEGVNIGENLSLGIRPEHLVPAEQAQVSLRGIVQVVELLGNETQIHLEIPEIKQPSLIYRQNDVILVNEGDEMNIGIVPERCHLFKEDGTACQRLFAEKGV.

One can recognise an ABC transporter domain in the interval Val-4–Ile-234. Gly-36–Ser-43 provides a ligand contact to ATP.

It belongs to the ABC transporter superfamily. Maltooligosaccharide importer (TC 3.A.1.1.1) family. In terms of assembly, the complex is composed of two ATP-binding proteins (MalK), two transmembrane proteins (MalG and MalK) and a solute-binding protein (MalE).

It localises to the cell inner membrane. It catalyses the reaction D-maltose(out) + ATP + H2O = D-maltose(in) + ADP + phosphate + H(+). Functionally, part of the ABC transporter complex MalEFGK involved in maltose/maltodextrin import. Responsible for energy coupling to the transport system. This is Maltose/maltodextrin import ATP-binding protein MalK from Mannheimia succiniciproducens (strain KCTC 0769BP / MBEL55E).